A 234-amino-acid polypeptide reads, in one-letter code: Purine nucleoside phosphorylase DeoD-type (234 aa).

Residue His-4 participates in a purine D-ribonucleoside binding. Residues Gly-20, Arg-24, Arg-43, and 87–90 each bind phosphate; that span reads RVGT. A purine D-ribonucleoside-binding positions include Glu-162, 178–180, and 202–203; these read EME and SD. Asp-203 (proton donor) is an active-site residue.

It belongs to the PNP/UDP phosphorylase family. As to quaternary structure, homohexamer; trimer of homodimers.

It carries out the reaction a purine D-ribonucleoside + phosphate = a purine nucleobase + alpha-D-ribose 1-phosphate. It catalyses the reaction a purine 2'-deoxy-D-ribonucleoside + phosphate = a purine nucleobase + 2-deoxy-alpha-D-ribose 1-phosphate. In terms of biological role, catalyzes the reversible phosphorolytic breakdown of the N-glycosidic bond in the beta-(deoxy)ribonucleoside molecules, with the formation of the corresponding free purine bases and pentose-1-phosphate. Its function is as follows. Cleavage of adenosine and its derivatives. This is Purine nucleoside phosphorylase DeoD-type from Geobacillus stearothermophilus (Bacillus stearothermophilus).